The primary structure comprises 470 residues: tRNA modification GTPase MnmE (470 aa).

Arg-30, Glu-92, and Arg-132 together coordinate (6S)-5-formyl-5,6,7,8-tetrahydrofolate. The TrmE-type G domain maps to 227–393 (GLQVALVGRP…LIKAVLKTCG (167 aa)). Asn-237 is a binding site for K(+). GTP is bound by residues 237 to 242 (NVGKSS), 256 to 262 (TDLPGTT), 281 to 284 (DTAG), and 342 to 345 (NKAD). A Mg(2+)-binding site is contributed by Ser-241. Positions 256, 258, and 261 each coordinate K(+). Thr-262 is a Mg(2+) binding site. Lys-470 lines the (6S)-5-formyl-5,6,7,8-tetrahydrofolate pocket.

This sequence belongs to the TRAFAC class TrmE-Era-EngA-EngB-Septin-like GTPase superfamily. TrmE GTPase family. Homodimer. Heterotetramer of two MnmE and two MnmG subunits. K(+) serves as cofactor.

It localises to the cytoplasm. In terms of biological role, exhibits a very high intrinsic GTPase hydrolysis rate. Involved in the addition of a carboxymethylaminomethyl (cmnm) group at the wobble position (U34) of certain tRNAs, forming tRNA-cmnm(5)s(2)U34. This Prochlorococcus marinus (strain MIT 9313) protein is tRNA modification GTPase MnmE.